The chain runs to 177 residues: MLRRLVQQWGVAVFLLSYSVPSCGRSVEELGRRLKRAVSEHQLLHDKGKSIQDLRRRFFLHHLIAEIHTAEIRATSEVSPNSKPAPNTKNHPVRFGSDDEGRYLTQETNKVETYKEQPLKTPGKKKKGKPGKRKEQEKKKRRTRSAWLNSGVAESGLEGDHPYDISATSLELNLRRH.

Positions 1-24 (MLRRLVQQWGVAVFLLSYSVPSCG) are cleaved as a signal peptide. A propeptide spanning residues 25–34 (RSVEELGRRL) is cleaved from the precursor. Residues 57-68 (RFFLHHLIAEIH) form an important for receptor binding region. Positions 74–177 (ATSEVSPNSK…TSLELNLRRH (104 aa)) are disordered. Polar residues predominate over residues 76 to 90 (SEVSPNSKPAPNTKN). Positions 108-129 (TNKVETYKEQPLKTPGKKKKGK) match the Nuclear localization signal motif. Residues 109-118 (NKVETYKEQP) show a composition bias toward basic and acidic residues. The segment covering 122 to 132 (PGKKKKGKPGK) has biased composition (basic residues).

This sequence belongs to the parathyroid hormone family. As to quaternary structure, PTHrP interacts with PTH1R (via N-terminal extracellular domain). In terms of processing, there are several secretory forms, including osteostatin, arising from endoproteolytic cleavage of the initial translation product. Each of these secretory forms is believed to have one or more of its own receptors that mediates the normal paracrine, autocrine and endocrine actions.

Its subcellular location is the secreted. It localises to the cytoplasm. It is found in the nucleus. Neuroendocrine peptide which is a critical regulator of cellular and organ growth, development, migration, differentiation and survival and of epithelial calcium ion transport. Acts by binding to its receptor, PTH1R, activating G protein-coupled receptor signaling. Regulates endochondral bone development and epithelial-mesenchymal interactions during the formation of the mammary glands and teeth. Required for skeletal homeostasis. Promotes mammary mesenchyme differentiation and bud outgrowth by modulating mesenchymal cell responsiveness to BMPs. Up-regulates BMPR1A expression in the mammary mesenchyme and this increases the sensitivity of these cells to BMPs and allows them to respond to BMP4 in a paracrine and/or autocrine fashion. BMP4 signaling in the mesenchyme, in turn, triggers epithelial outgrowth and augments MSX2 expression, which causes the mammary mesenchyme to inhibit hair follicle formation within the nipple sheath. In terms of biological role, potent inhibitor of osteoclastic bone resorption. This is Parathyroid hormone-related protein (PTHLH) from Canis lupus familiaris (Dog).